The sequence spans 302 residues: 4-hydroxy-tetrahydrodipicolinate synthase (302 aa).

T46 serves as a coordination point for pyruvate. Y134 functions as the Proton donor/acceptor in the catalytic mechanism. K162 serves as the catalytic Schiff-base intermediate with substrate. I204 serves as a coordination point for pyruvate.

Belongs to the DapA family. As to quaternary structure, homotetramer; dimer of dimers.

It is found in the cytoplasm. The enzyme catalyses L-aspartate 4-semialdehyde + pyruvate = (2S,4S)-4-hydroxy-2,3,4,5-tetrahydrodipicolinate + H2O + H(+). The protein operates within amino-acid biosynthesis; L-lysine biosynthesis via DAP pathway; (S)-tetrahydrodipicolinate from L-aspartate: step 3/4. In terms of biological role, catalyzes the condensation of (S)-aspartate-beta-semialdehyde [(S)-ASA] and pyruvate to 4-hydroxy-tetrahydrodipicolinate (HTPA). This chain is 4-hydroxy-tetrahydrodipicolinate synthase, found in Xanthomonas axonopodis pv. citri (strain 306).